A 249-amino-acid polypeptide reads, in one-letter code: Beta-crystallin B1 (249 aa).

The segment at 1–49 is disordered; the sequence is MSQPAVKASATAAVNPGPDGKGKGAPPPGPAPGSGPAQAPAQPMPAAKG. Serine 2 bears the N-acetylserine mark. An N-terminal arm region spans residues 2 to 55; that stretch reads SQPAVKASATAAVNPGPDGKGKGAPPPGPAPGSGPAQAPAQPMPAAKGDLPPGS. The span at 34-49 shows a compositional bias: low complexity; that stretch reads SGPAQAPAQPMPAAKG. Beta/gamma crystallin 'Greek key' domains are found at residues 56–95 and 96–140; these read YKLV…IVTS and GPWV…RPIR. Residues 141 to 145 are connecting peptide; that stretch reads MDAQE. Beta/gamma crystallin 'Greek key' domains follow at residues 146–187 and 188–230; these read HKLC…RVSS and GTWV…RRLR. A C-terminal arm region spans residues 232–249; the sequence is RQWHREGCFPVLAAEPPK.

This sequence belongs to the beta/gamma-crystallin family. In terms of assembly, homo/heterodimer, or complexes of higher-order. The structure of beta-crystallin oligomers seems to be stabilized through interactions between the N-terminal arms. Specific cleavages in the N-terminal arm occur during lens maturation and give rise to truncated forms, leading to impaired oligomerization and protein insolubilization.

Functionally, crystallins are the dominant structural components of the vertebrate eye lens. The chain is Beta-crystallin B1 (CRYBB1) from Sus scrofa (Pig).